Here is a 122-residue protein sequence, read N- to C-terminus: MSDKTVKSTNLMAFVATKMLERQEDLDTCTEMQVEKMKTSTKARLKTESSFAPRTWEDAIKDKILRRSVDTSSLDKWQELKQELENVSDALKADSLWLPMKSLSLYSKVSNQEPSSIPIGEM.

Positions 96–105 match the Nuclear export signal motif; that stretch reads LWLPMKSLSL.

In terms of assembly, binds M1 protein. May interact with human nucleoporins and exportin XPO1/CRM1.

It localises to the virion. Its subcellular location is the host nucleus. Functionally, mediates the nuclear export of encapsidated genomic RNAs (ribonucleoproteins, RNPs). Acts as an adapter between viral RNPs complexes and the nuclear export machinery of the cell. Possesses no intrinsic RNA-binding activity, but includes a C-terminal M1-binding domain. This domain is believed to allow recognition of RNPs to which the M1 protein is bound. Because the M1 protein is not available in large quantities until the later stages of infection, such an indirect recognition mechanism probably ensures that genomic RNPs are not exported from the nucleus before sufficient quantities of viral mRNA and progeny genomic RNA have been synthesized. Furthermore, the RNPs enters the cytoplasm only when they have associated with the M1 protein that is necessary to guide them to the plasma membrane. May down-regulate viral RNA synthesis when overproduced. This is Nuclear export protein (NS) from Homo sapiens (Human).